Reading from the N-terminus, the 216-residue chain is MTHVFTIAIDGPAGAGKGTLARRLADHYRLNLLDTGLTYRAVAYALIQHALPLDNVSAAETAARQVDMAKLDRAVLSAHAIGEAASKVAVYPTVRRILVEKQRAFARTPPGAVLDGRDIGTVVCPDADIKLYVTASAEVRAMRRLAEIESIGGTANFTEILADIVRRDERDMGRADSPLKPAADAHLLDTSEMAIEAAFLAAMAIVDDVLTRRNKA.

11 to 19 is a binding site for ATP; that stretch reads GPAGAGKGT.

It belongs to the cytidylate kinase family. Type 1 subfamily.

Its subcellular location is the cytoplasm. The enzyme catalyses CMP + ATP = CDP + ADP. It carries out the reaction dCMP + ATP = dCDP + ADP. The polypeptide is Cytidylate kinase (Mesorhizobium japonicum (strain LMG 29417 / CECT 9101 / MAFF 303099) (Mesorhizobium loti (strain MAFF 303099))).